Here is a 36-residue protein sequence, read N- to C-terminus: Trypsin inhibitor 2 (36 aa).

3 disulfide bridges follow: Cys3–Cys20, Cys10–Cys24, and Cys19–Cys35.

Its function is as follows. Trypsin inhibitor. This is Trypsin inhibitor 2 from Spinacia oleracea (Spinach).